A 715-amino-acid polypeptide reads, in one-letter code: MSFQGTSSGSSHSSKSKLNQVVQNFFSKATQVVVQARLNPRLREQRQSGDKHKLNKWFNLETDELEAYREDLKLWRTIDIYNMDKMPPVVVETYLDMRHLSPNQTLVLEDAFGKRWNASFGGRKTEVVLERWVIEIQRPDPQAGGATTSPASSTELPMAYKKCILLFRSLYTYCRLLPAWTLQKRLSKSKLSTSPLRIGCRVLNGSQPISSRGRVGLSKLIAGSSESQHLQTFSFDPVEIPSGVFKISVSYRVNCNFAVDDSEAMLSSQFLRIDEEKPVVPPSPPVKHPSMAAPNLHYITGLPRRHSHSQGVGVSGAAIVPTSVSSVTDYMERRRSSGASGVGATGGGLAGTSGGSGGVSGGVSGGSGGSGGSGGWGGEEGSPGPAATSASPSTPPFARVPSSSSLAALRIPRRTISNSSTSSTNNARVVTTPGYTPSAYEQAISSSGGSSRSGSVPKYSSSFGTRQWNRSGSISSTRRRNSMLVGSAESAMSSGSSLMEPGSGFIDIEDPTDVSDFVKMVDSIKPGSPYSLPSPRKGSDPLARFQQLKGSHAGIADSITSSIYHHQPSPPYVRSKLSGEANLEAISSLPRPVTVPPSPRKLETQMQPISLADQHTSEYHQLQQRTSARPQAHSYSERDQLDNSHYKALERYDLVGASPSVVGSRYYTEHDRGRGEKRYSVAPLPGLEFDEDDDLLFAMSDMAMGDSASGGNVRT.

Residues 329-510 (DYMERRRSSG…PGSGFIDIED (182 aa)) are disordered. Positions 340-381 (SGVGATGGGLAGTSGGSGGVSGGVSGGSGGSGGSGGWGGEEG) are enriched in gly residues. Composition is skewed to low complexity over residues 382–392 (SPGPAATSASP), 414–432 (RTIS…VVTT), and 445–455 (SSSGGSSRSGS). Residues 458 to 476 (KYSSSFGTRQWNRSGSISS) are compositionally biased toward polar residues. Residues 486-500 (GSAESAMSSGSSLME) show a composition bias toward low complexity.

The protein belongs to the ATG13 family. Fungi subfamily. In terms of assembly, interacts with ATG1 to form the ATG1-ATG13 kinase complex.

The protein resides in the cytoplasm. It is found in the preautophagosomal structure. In terms of biological role, activates the ATG1 kinase in a nutritional condition dependent manner through the TOR pathway, leading to autophagy. Also involved in cytoplasm to vacuole transport (Cvt) and more specifically in Cvt vesicle formation. Seems to play a role in the switching machinery regulating the conversion between the Cvt pathway and autophagy. Finally, ATG13 is also required for glycogen storage during stationary phase. The sequence is that of Autophagy-related protein 13 (ATG13) from Yarrowia lipolytica (strain CLIB 122 / E 150) (Yeast).